The chain runs to 155 residues: Probable ribosome biogenesis protein RLP24 (155 aa).

It belongs to the eukaryotic ribosomal protein eL24 family.

This chain is Probable ribosome biogenesis protein RLP24 (RPL24), found in Encephalitozoon cuniculi (strain GB-M1) (Microsporidian parasite).